The sequence spans 252 residues: Chitooligosaccharide deacetylase (252 aa).

Histidine 61 and histidine 125 together coordinate Mg(2+).

This sequence belongs to the YdjC deacetylase family. ChbG subfamily. In terms of assembly, homodimer. Mg(2+) serves as cofactor.

Its subcellular location is the cytoplasm. The enzyme catalyses N,N'-diacetylchitobiose + H2O = N-acetyl-beta-D-glucosaminyl-(1-&gt;4)-D-glucosamine + acetate. The catalysed reaction is diacetylchitobiose-6'-phosphate + H2O = N'-monoacetylchitobiose-6'-phosphate + acetate. The protein operates within glycan degradation; chitin degradation. Functionally, involved in the degradation of chitin. ChbG is essential for growth on the acetylated chitooligosaccharides chitobiose and chitotriose but is dispensable for growth on cellobiose and chitosan dimer, the deacetylated form of chitobiose. Deacetylation of chitobiose-6-P and chitotriose-6-P is necessary for both the activation of the chb promoter by the regulatory protein ChbR and the hydrolysis of phosphorylated beta-glucosides by the phospho-beta-glucosidase ChbF. Catalyzes the removal of only one acetyl group from chitobiose-6-P to yield monoacetylchitobiose-6-P, the inducer of ChbR and the substrate of ChbF. This is Chitooligosaccharide deacetylase from Shigella flexneri serotype 5b (strain 8401).